Consider the following 510-residue polypeptide: GMP synthase [glutamine-hydrolyzing] (510 aa).

In terms of domain architecture, Glutamine amidotransferase type-1 spans 5 to 195 (LVLVVDFGGQ…LFNVCNLKGD (191 aa)). The active-site Nucleophile is cysteine 82. Catalysis depends on residues histidine 169 and glutamate 171. The region spanning 196–385 (WSMSSFAEQQ…LGIPHKLVWR (190 aa)) is the GMPS ATP-PPase domain. 223–229 (SGGVDSS) contacts ATP.

In terms of assembly, homodimer.

The catalysed reaction is XMP + L-glutamine + ATP + H2O = GMP + L-glutamate + AMP + diphosphate + 2 H(+). Its pathway is purine metabolism; GMP biosynthesis; GMP from XMP (L-Gln route): step 1/1. Functionally, catalyzes the synthesis of GMP from XMP. The protein is GMP synthase [glutamine-hydrolyzing] of Clostridium botulinum (strain Loch Maree / Type A3).